Reading from the N-terminus, the 124-residue chain is MADLKKLAEEIVGLTLLEAQELKTILKDEYGIEPAAGGAVMMAGPADGAGGAAEEQTEFDVVLKNAGASKINVIKEVRGITGLGLKEAKDLVEAGGKIKEGVDKAEAEEIKGKLEAAGAEVELA.

This sequence belongs to the bacterial ribosomal protein bL12 family. In terms of assembly, homodimer. Part of the ribosomal stalk of the 50S ribosomal subunit. Forms a multimeric L10(L12)X complex, where L10 forms an elongated spine to which 2 to 4 L12 dimers bind in a sequential fashion. Binds GTP-bound translation factors.

Functionally, forms part of the ribosomal stalk which helps the ribosome interact with GTP-bound translation factors. Is thus essential for accurate translation. This Jannaschia sp. (strain CCS1) protein is Large ribosomal subunit protein bL12.